Reading from the N-terminus, the 396-residue chain is Phosphoglycerate kinase (396 aa).

Substrate-binding positions include 21 to 23 (DFN), Arg37, 60 to 63 (HLGR), Arg121, and Arg154. Residues Lys205, Gly296, Glu327, and 353-356 (GGDS) each bind ATP.

This sequence belongs to the phosphoglycerate kinase family. In terms of assembly, monomer.

The protein localises to the cytoplasm. It carries out the reaction (2R)-3-phosphoglycerate + ATP = (2R)-3-phospho-glyceroyl phosphate + ADP. The protein operates within carbohydrate degradation; glycolysis; pyruvate from D-glyceraldehyde 3-phosphate: step 2/5. In Anaeromyxobacter dehalogenans (strain 2CP-C), this protein is Phosphoglycerate kinase.